The following is a 1763-amino-acid chain: MSQTLSFVLKTHSVRKDFVHSVKRTLARRRDLQYLNNKLSRSMRAEACPSCASYDVCPNCTSGDIPDDGSSTMTIPSWEEITKTSTYSLLLSEDTSDELCPDDLVNVAAHIRKALSTQSHPANVEMCKEQLTSLLVMAEAMLPQRSRSMIPLHQQHQTARLEWREKFFSKPIDFLLERIGVSKDILQITAIWKIILEKACYCKSYGEEWFNIAKQKLREIKCFEGNTLKPLVGAFIDGLRLMTVDNPNPMAFLPKLIGLIKPLNLAMIIDNHENTTSGWIITLTAIMELYGITECTIDIITSLITTFYDKLAKATKFYSQVKALFMGFRSEDVANSFWYMAAAILCYLITGLIPNNGKFSKIKACLSGATTLVSGIIATQKLAAMFATWNSESIVNELSARTVAISELNNPTTTSDTDSVERLLELAKILHEEIKVHTLNPIMQSYNPILRNLMSTLDGVITSCNKRKAIARKRQVPVCYILTGPPGCGKTTAAQALAKKLSDQEPSVINLDVDHHDTYTGNEVCIIDEFDSSDKVDYANFVIGMVNSAPMVLNCDMLENKGKLFTSKYIIMTSNSETPVKPSSKRAGAFYRRVTIIDVTNPLVESHKRARPGTSVPRSCYKKNFSHLSLAKRGAECWCKEYVLDPKGLQHQTIKAPPPTFLNIDSLAQTMKQDFTLKNMAFEAEEGCSDHRYGFVCQQSEVETVRRLLNAIRVRLNATFTVCVGPEASNSVGCTAHVLTPDEPFNGKKFVVSRCNEASLSALEGNCVQSALGVCMSNKDLVHLCHFIRGKIVNDSVRLDELPANQHVVTVNSVFDLAWALRRHLSLTGQFQAIRAAYDVLTVPDKIPAMLRHWMDQTSFSDEHVVTQFVTPGGIVILESCGGARIWALGHNVIRAGGVTATPTGGCVRLMGLSAQTMPWCEIFRELFSLLAKIWSSVKVSTLVLTALGMYASRFRPKSEAKGKTKSKIGPYRGRGVALTDDEYDEWKEHNASRKLDLSVEDFLMLRHRAALGADDADAVKFRSWWNSRSKLADDYEDVTVIGKGGVKHERIRTSTLKAVDRGYDVSFAEESGPGTKFHKNAIGSVTDVCGEHKGYCVHMGHGVYASVAHVVKGDSFFLGERIFDLKTNGEFCCFRSTKILPSAAPFFSGKPTRDPWGSPVATEWKAKAYTTTSGKIVGCFATTSTETHPGDCGLPYIDDNGRVTGLHTGSGGPKTPSAKLVVPYVHIDMRTKAVTAQKYDVTKPDISYKGLICKQLDEIRIIPKGTRLHVSPAHTEDYEECSHQPASLGSGDPRCPKSLTAIVVDSLKPYCEKVEGPPHDILHRVQKMLIDHLSGFVPMNISSETSMLSAFHKLNHDTSCGPYLGGRKKDHMTNGEPDKTLLDLLSSKWKLATQGISLPHEYTIGLKDELRPVEKVAEGKRRMIWGCDVGVATVCAAAFKAVSDAITANHQYGPVQVGINMDSPSVEALYQRIKSAAKVYAVDYSKWDSTQSPRVSAASIDILRYFSDRSPIVDSAANTLKSPPVAIFNGVAVKVTSGLPSGMPLTSVINSLNHCLYVGCAIMQSLEARNIPVTWNLFSSFDVMTYGDDGVYMFPTMFASISDQIFGNLSAYGLKPTRVDKSIGAIEPIDPDSVVFLKRTITRTPQGIRGLLDRSSIIRQFYYIKGENSDDWKTPPKTIDPTSRGQQLWNACLYASQHGSEFYNKVYRLAVRAVEYEELHFEPPTYSSALEHYNSQFNGVEARSDQINMSDGTALHCDVFEV.

One can recognise an SF3 helicase domain in the interval 458–614 (DGVITSCNKR…ESHKRARPGT (157 aa)). An ATP-binding site is contributed by 484 to 491 (GPPGCGKT). O-(5'-phospho-RNA)-tyrosine is present on Y984. The Peptidase C24 domain occupies 1073-1229 (GPGTKFHKNA…KLVVPYVHID (157 aa)). Active-site for 3CLpro activity residues include H1110, E1131, and C1193. The region spanning 1478 to 1603 (AKVYAVDYSK…MFPTMFASIS (126 aa)) is the RdRp catalytic domain.

As to quaternary structure, protein p32: Homodimer. Interacts with NTPase, protein p30 and protease-polymerase p76. Interacts with capsid protein VP1 and protease-polymerase p76. In terms of assembly, homooligomer. Interacts with Vpg, protein p32 and may interact with capsid protein VP1. Specific enzymatic cleavages in vivo yield mature proteins. Pro-Pol is first autocatalytically cleaved, then processes the whole polyprotein. Post-translationally, VPg is uridylylated by the polymerase and is covalently attached to the 5'-end of the polyadenylated genomic and subgenomic RNAs. This uridylylated form acts as a nucleotide-peptide primer for the polymerase.

It carries out the reaction a ribonucleoside 5'-triphosphate + H2O = a ribonucleoside 5'-diphosphate + phosphate + H(+). It catalyses the reaction RNA(n) + a ribonucleoside 5'-triphosphate = RNA(n+1) + diphosphate. The catalysed reaction is Endopeptidase with a preference for cleavage when the P1 position is occupied by Glu-|-Xaa and the P1' position is occupied by Gly-|-Yaa.. Functionally, NTPase presumably plays a role in replication. Despite having similarities with helicases, does not seem to display any helicase activity. In terms of biological role, viral genome-linked protein is covalently linked to the 5'-end of the positive-strand, negative-strand genomic RNAs and subgenomic RNA. Acts as a genome-linked replication primer. May recruit ribosome to viral RNA thereby promoting viral proteins translation. Its function is as follows. The protease activity processes the polyprotein: Pro-Pol is first released by autocleavage, then all other proteins are cleaved. Cleaves host translation initiation factor eIF4G1, eIF4G2 and PABP1 thereby inducing a shutdown of host protein synthesis. This shutdown may not prevent viral mRNA from being translated since viral Vpg replaces the cap. May cleave host polyadenylate-binding protein thereby inhibiting cellular translation. Seems to act as a RNase and degrades host Pol II-driven mRNAs with the help of host XRN1. Inhibits the integrated stress response (ISR) in the infected cell by cleaving host G3BP1 and G3BP2. Stress granule formation is thus inhibited, which allows protein synthesis and viral replication. The RNA-directed RNA polymerase activity replicates genomic and antigenomic viral RNA by recognizing specific signals. Also transcribes a subgenomic mRNA by initiating RNA synthesis internally on antigenomic RNA. This sgRNA codes for structural proteins. Catalyzes the covalent attachment VPg with viral RNAs. Selectively decays the mRNA of host interferon receptor IFNAR1. In Feline calicivirus (FCV), this protein is Genome polyprotein.